A 154-amino-acid chain; its full sequence is Endoribonuclease YbeY (154 aa).

3 residues coordinate Zn(2+): His114, His118, and His124.

Belongs to the endoribonuclease YbeY family. Zn(2+) serves as cofactor.

It localises to the cytoplasm. In terms of biological role, single strand-specific metallo-endoribonuclease involved in late-stage 70S ribosome quality control and in maturation of the 3' terminus of the 16S rRNA. The sequence is that of Endoribonuclease YbeY from Anaplasma phagocytophilum (strain HZ).